The sequence spans 92 residues: Transcription factor ILI6 (92 aa).

A disordered region spans residues 1-20 (MSSRRSRSRQSGSSRITDEQ). A bHLH domain is found at 5-59 (RSRSRQSGSSRITDEQISDLVSKLQDLLPEARLRSNDRVPSSRVLQETCNYIRSL).

Belongs to the bHLH protein family. In terms of assembly, interacts with APG.

The protein resides in the nucleus. In terms of biological role, atypical and probable non DNA-binding bHLH transcription factor that acts as a positive regulator of grain size. Binds the transcription repressor APG and forms a heterodimer of antagonistic bHLH transcription factors that regulates grain length and weight by controlling cell elongation in lemma and palea. May be involved in the control of lamina inclination through brassinosteroid signaling pathway. This is Transcription factor ILI6 (ILI6) from Oryza sativa subsp. indica (Rice).